The primary structure comprises 383 residues: MRVLAAMSGGVDSAVAAARAVDAGHEVTGVHLALSRTPGTLRTGARGCCTIEDSRDAWRAAEKLGIPYYVWDFSERFQADVVDDFVAEYAAGRTPNPCMRCNEKIKFAALLEKALALGFDAVCTGHYAKVVEGPDGHKELHRAADWAKDQSYVLGVLTAEQLEHAIFPLAETPSKAQVRAEAEERGLSVATKPDSHDICFIPDGDTRGWLADHMDLDPGRIVDTEGNELGEHRGAQAYTVGQRRGLHIGRPAPDGKPRFVLEIRPKTNEVVVGPEQLLAIDVMEGIRPSWAGLPPREVAALGADPKARSEEFEVTVQVRAHGDPAPARAWLTRSEGTPRLHVRLDTAQRGVAPGQTMVLYQGTRVLGQATIDAAFADRPHAAV.

ATP contacts are provided by residues A6–S13 and L32. C101 functions as the Nucleophile in the catalytic mechanism. A disulfide bridge connects residues C101 and C199. G125 is an ATP binding site. Residues K148 to Q150 form an interaction with tRNA region. Residue C199 is the Cysteine persulfide intermediate of the active site.

It belongs to the MnmA/TRMU family.

The protein resides in the cytoplasm. It carries out the reaction S-sulfanyl-L-cysteinyl-[protein] + uridine(34) in tRNA + AH2 + ATP = 2-thiouridine(34) in tRNA + L-cysteinyl-[protein] + A + AMP + diphosphate + H(+). In terms of biological role, catalyzes the 2-thiolation of uridine at the wobble position (U34) of tRNA, leading to the formation of s(2)U34. The sequence is that of tRNA-specific 2-thiouridylase MnmA from Kocuria rhizophila (strain ATCC 9341 / DSM 348 / NBRC 103217 / DC2201).